We begin with the raw amino-acid sequence, 451 residues long: Golgi reassembly-stacking protein 2 (451 aa).

Gly-2 is lipidated: N-myristoyl glycine. 2 consecutive PDZ GRASP-type domains span residues 15–105 (EGYH…FCSF) and 111–199 (NVWH…YGYL). The tract at residues 15–215 (EGYHVLRVQE…PFEEGKKISL (201 aa)) is GRASP. Dimethylated arginine is present on residues Arg-30 and Arg-47. The important for membrane binding stretch occupies residues 194 to 199 (IGYGYL). Ser-214 bears the Phosphoserine mark. Thr-222 carries the post-translational modification Phosphothreonine. Thr-225 bears the Phosphothreonine; by MAPK mark. Over residues 236 to 252 (LSSVSPPSLSPPGTTGV) the composition is skewed to low complexity. Disordered regions lie at residues 236–255 (LSSVSPPSLSPPGTTGVEQS) and 377–451 (EGSS…SEPS). Positions 410–424 (SSLTVDVTSPASKVP) are enriched in polar residues. Ser-411 carries the phosphoserine modification. Phosphothreonine occurs at positions 417 and 435. Phosphoserine occurs at positions 443 and 448.

This sequence belongs to the GORASP family. As to quaternary structure, homodimer. Homooligomer. ER stress induces phosphorylation-dependent monomerization. Interacts with BLZF1/Golgin 45. Identified in a complex with RAB2 and GORASP2. Interacts with JAM2 and JAM3. Interacts with members of the p24 cargo receptors. Interacts with CNIH and the cytoplasmic domain of transmembrane TGFA, prior its transit in the trans-Golgi. Interacts with KCTD5. Interacts with TMED2 and TMED3. Interacts with SEC16A in response to ER stress. Interacts (via PDZ GRASP-type 1 domain) with core-glycosylated CFTR in response to ER stress. In terms of processing, myristoylated. Myristoylation is essential for the Golgi targeting. Palmitoylated. Post-translationally, phosphorylated in mitotic cells. ER stress-induced phosphorylation at Ser-443 induces monomerization and subsequent relocalization from Golgi to ER which is essential for mediating unconventional (ER/Golgi-independent) trafficking of CFTR to the cell membrane. In terms of tissue distribution, detected in lung, heart and testis. Colocalized in a polarized fashion in the acrosome region with JAM3 in round spermatids (at protein level).

The protein localises to the golgi apparatus membrane. The protein resides in the endoplasmic reticulum membrane. It localises to the golgi apparatus. Its function is as follows. Key structural protein of the Golgi apparatus. The membrane cisternae of the Golgi apparatus adhere to each other to form stacks, which are aligned side by side to form the Golgi ribbon. Acting in concert with GORASP1/GRASP65, is required for the formation and maintenance of the Golgi ribbon, and may be dispensable for the formation of stacks. However, other studies suggest that GORASP2 plays a role in assembly and membrane stacking of the Golgi cisternae, and in the process by which Golgi stacks reform after breakdown during mitosis and meiosis. May regulate the intracellular transport and presentation of a defined set of transmembrane proteins, such as transmembrane TGFA. Required for normal acrosome formation during spermiogenesis and normal male fertility, probably by promoting colocalization of JAM2 and JAM3 at contact sites between germ cells and Sertoli cells. Mediates ER stress-induced unconventional (ER/Golgi-independent) trafficking of core-glycosylated CFTR to cell membrane. This is Golgi reassembly-stacking protein 2 (Gorasp2) from Mus musculus (Mouse).